Consider the following 109-residue polypeptide: Spermidine export protein MdtI (109 aa).

The next 4 helical transmembrane spans lie at 6-26 (WVHG…NVLL), 36-56 (CYGI…SQAV), 64-84 (AYAL…WVLF), and 88-108 (LNPK…MIKL).

This sequence belongs to the drug/metabolite transporter (DMT) superfamily. Small multidrug resistance (SMR) (TC 2.A.7.1) family. MdtI subfamily. In terms of assembly, forms a complex with MdtJ.

It localises to the cell inner membrane. Catalyzes the excretion of spermidine. In Salmonella arizonae (strain ATCC BAA-731 / CDC346-86 / RSK2980), this protein is Spermidine export protein MdtI.